Reading from the N-terminus, the 343-residue chain is L-ornithine/L-arginine 3-hydroxylase (343 aa).

Fe cation is bound by residues His-147 and Glu-149. The span at 199–215 (MPDNSHLPQNTAESTGD) shows a compositional bias: polar residues. Residues 199-218 (MPDNSHLPQNTAESTGDPTK) are disordered. Residue His-302 coordinates Fe cation. A 2-oxoglutarate-binding site is contributed by Arg-316.

The protein belongs to the clavaminate synthase family. Requires Fe(2+) as cofactor.

The enzyme catalyses L-ornithine + 2-oxoglutarate + O2 = (3S)-3-hydroxy-L-ornithine + succinate + CO2. It carries out the reaction L-arginine + 2-oxoglutarate + O2 = (2S,3S)-hydroxyarginine + succinate + CO2. Alpha-ketoglutarate-dependent dioxygenase that in vitro catalyzes the regio- and stereoselective hydroxylation of L-ornithine and L-arginine, leading to (3S)-3-hydroxy-L-ornithine and (3S)-3-hydroxy-L-arginine, respectively. Cannot use L-lysine, D-ornithine, or D-arginine as substrate. The protein is L-ornithine/L-arginine 3-hydroxylase of Catenulispora acidiphila (strain DSM 44928 / JCM 14897 / NBRC 102108 / NRRL B-24433 / ID139908).